The chain runs to 745 residues: Capsid protein (745 aa).

4 disordered regions span residues 44 to 64, 580 to 602, 638 to 662, and 678 to 699; these read RRRF…GRRK, SQAI…TLPR, EYSS…RPEG, and QDSQ…QAHQ. Acidic residues predominate over residues 681 to 692; that stretch reads QDSEESQEEAPL.

Belongs to the anelloviridae capsid protein family.

Its subcellular location is the virion. Self assemble to form an icosahedral capsid. In Torque teno virus (isolate Human/China/CT23F/2001) (TTV), this protein is Capsid protein.